The chain runs to 119 residues: Protein TusC (119 aa).

This sequence belongs to the DsrF/TusC family. Heterohexamer, formed by a dimer of trimers. The hexameric TusBCD complex contains 2 copies each of TusB, TusC and TusD. The TusBCD complex interacts with TusE.

The protein localises to the cytoplasm. Functionally, part of a sulfur-relay system required for 2-thiolation of 5-methylaminomethyl-2-thiouridine (mnm(5)s(2)U) at tRNA wobble positions. The sequence is that of Protein TusC from Buchnera aphidicola subsp. Baizongia pistaciae (strain Bp).